The chain runs to 171 residues: 3-hydroxydecanoyl-[acyl-carrier-protein] dehydratase (171 aa).

Histidine 70 is a catalytic residue.

The protein belongs to the thioester dehydratase family. FabA subfamily. Homodimer.

It is found in the cytoplasm. It catalyses the reaction a (3R)-hydroxyacyl-[ACP] = a (2E)-enoyl-[ACP] + H2O. The catalysed reaction is (3R)-hydroxydecanoyl-[ACP] = (2E)-decenoyl-[ACP] + H2O. The enzyme catalyses (2E)-decenoyl-[ACP] = (3Z)-decenoyl-[ACP]. Its pathway is lipid metabolism; fatty acid biosynthesis. In terms of biological role, necessary for the introduction of cis unsaturation into fatty acids. Catalyzes the dehydration of (3R)-3-hydroxydecanoyl-ACP to E-(2)-decenoyl-ACP and then its isomerization to Z-(3)-decenoyl-ACP. Can catalyze the dehydratase reaction for beta-hydroxyacyl-ACPs with saturated chain lengths up to 16:0, being most active on intermediate chain length. This Hydrogenovibrio crunogenus (strain DSM 25203 / XCL-2) (Thiomicrospira crunogena) protein is 3-hydroxydecanoyl-[acyl-carrier-protein] dehydratase.